The sequence spans 216 residues: Oligoribonuclease (216 aa).

Positions 6–171 constitute an Exonuclease domain; sequence VVWMDCEMTG…ADIKESIREL (166 aa). The active site involves Tyr128.

This sequence belongs to the oligoribonuclease family.

It is found in the cytoplasm. Functionally, 3'-to-5' exoribonuclease specific for small oligoribonucleotides. The chain is Oligoribonuclease from Nocardia farcinica (strain IFM 10152).